The chain runs to 375 residues: 4-hydroxy-3-methylbut-2-en-1-yl diphosphate synthase (flavodoxin) (375 aa).

Cys-270, Cys-273, Cys-305, and Glu-312 together coordinate [4Fe-4S] cluster.

It belongs to the IspG family. Requires [4Fe-4S] cluster as cofactor.

It carries out the reaction (2E)-4-hydroxy-3-methylbut-2-enyl diphosphate + oxidized [flavodoxin] + H2O + 2 H(+) = 2-C-methyl-D-erythritol 2,4-cyclic diphosphate + reduced [flavodoxin]. It functions in the pathway isoprenoid biosynthesis; isopentenyl diphosphate biosynthesis via DXP pathway; isopentenyl diphosphate from 1-deoxy-D-xylulose 5-phosphate: step 5/6. Converts 2C-methyl-D-erythritol 2,4-cyclodiphosphate (ME-2,4cPP) into 1-hydroxy-2-methyl-2-(E)-butenyl 4-diphosphate. This chain is 4-hydroxy-3-methylbut-2-en-1-yl diphosphate synthase (flavodoxin), found in Shigella flexneri serotype 5b (strain 8401).